Here is a 520-residue protein sequence, read N- to C-terminus: GMP synthase [glutamine-hydrolyzing] (520 aa).

The Glutamine amidotransferase type-1 domain maps to 12-205 (KIIVLDYGSQ…AIFICGARGD (194 aa)). The Nucleophile role is filled by cysteine 89. Residues histidine 179 and glutamate 181 contribute to the active site. A GMPS ATP-PPase domain is found at 206-395 (WSMDNFIDMQ…LGMPENIVWR (190 aa)). 233-239 (SGGVDSS) contacts ATP.

Homodimer.

It carries out the reaction XMP + L-glutamine + ATP + H2O = GMP + L-glutamate + AMP + diphosphate + 2 H(+). The protein operates within purine metabolism; GMP biosynthesis; GMP from XMP (L-Gln route): step 1/1. Functionally, catalyzes the synthesis of GMP from XMP. The protein is GMP synthase [glutamine-hydrolyzing] of Streptococcus uberis (strain ATCC BAA-854 / 0140J).